The following is a 367-amino-acid chain: Mating-type protein ALPHA2 (367 aa).

A DNA-binding region (homeobox; TALE-type) is located at residues Gly273–Arg338.

It belongs to the TALE/M-ATYP homeobox family. In terms of assembly, forms a heterodimer with A1.

It localises to the nucleus. In terms of biological role, mating type proteins are sequence specific DNA-binding proteins that act as master switches in yeast differentiation by controlling gene expression in a cell type-specific fashion. Transcriptional corepressor that acts in conjunction with A1 to repress transcription of haploid-specific genes. In Yarrowia lipolytica (strain CLIB 122 / E 150) (Yeast), this protein is Mating-type protein ALPHA2 (MATB2).